A 183-amino-acid polypeptide reads, in one-letter code: MAMNTETLSLIKQSIKTIPNYPKEGILFRDVTSLLENATAYKATIDLLVEHYRSKGFTKIVGTEARGFLFGAPLALGLGIGFVPVRKPGKLPRATISQSYELEYGHDSLEIHTDAITANDKVLVVDDLLATGGTIEATVKLIRQLGGEVQDAAFVISLPDLGGEARLTALGLELVKLCEFEGE.

The protein belongs to the purine/pyrimidine phosphoribosyltransferase family. As to quaternary structure, homodimer.

The protein localises to the cytoplasm. The catalysed reaction is AMP + diphosphate = 5-phospho-alpha-D-ribose 1-diphosphate + adenine. The protein operates within purine metabolism; AMP biosynthesis via salvage pathway; AMP from adenine: step 1/1. Its function is as follows. Catalyzes a salvage reaction resulting in the formation of AMP, that is energically less costly than de novo synthesis. The sequence is that of Adenine phosphoribosyltransferase from Shewanella oneidensis (strain ATCC 700550 / JCM 31522 / CIP 106686 / LMG 19005 / NCIMB 14063 / MR-1).